An 82-amino-acid chain; its full sequence is Ice-structuring protein A (82 aa).

Positions 1–23 are cleaved as a signal peptide; the sequence is MALSLFTVGQLIFLFWTMRITEA. Residues 24 to 44 constitute a propeptide, removed by a dipeptidylpeptidase; sequence SPDPAAKAAPAAAAAPAAAAP. Arg81 bears the Arginine amide mark.

The protein belongs to the type-I AFP family. In terms of tissue distribution, detected in liver and in blood serum (at protein level).

It localises to the secreted. Contributes to protect fish blood from freezing at subzero sea water temperatures. Lowers the blood freezing point. Binds to nascent ice crystals and prevents further growth. This is Ice-structuring protein A from Pseudopleuronectes americanus (Winter flounder).